A 247-amino-acid polypeptide reads, in one-letter code: C-type lectin domain family 7 member A (247 aa).

The Cytoplasmic segment spans residues 1 to 44; the sequence is MEYHPDLENLDEDGYTQLHFDSRSNTRIAVVSEKGSCVASPPWR. An ITAM-like motif is present at residues 15 to 18; it reads YTQL. Residues 45–65 form a helical; Signal-anchor for type II membrane protein membrane-spanning segment; sequence LIAVILGILCLVILVIAVVLG. Topologically, residues 66 to 247 are extracellular; sequence TMAIWRPNSG…CSICEKKFSM (182 aa). A disordered region spans residues 81 to 105; it reads NGYFPSRNKENHSQPTQSPLEESVT. Asn-91 carries N-linked (GlcNAc...) asparagine glycosylation. Residues 93-105 show a composition bias toward polar residues; the sequence is SQPTQSPLEESVT. 3 cysteine pairs are disulfide-bonded: Cys-120–Cys-131, Cys-148–Cys-241, and Cys-220–Cys-233. The C-type lectin domain occupies 127–242; sequence YEKSCYLFSP…CSVPSCSICE (116 aa). 146–153 lines the (1,3-beta-D-glucosyl)n pocket; the sequence is RQCSQLGS. The a divalent metal cation site is built by Lys-157, Asp-159, and Glu-163. Glu-195 serves as a coordination point for (1,3-beta-D-glucosyl)n. Residue Glu-242 participates in a divalent metal cation binding.

As to quaternary structure, homodimer. Interacts with SYK; participates in leukocyte activation in presence of fungal pathogens. Interacts with CD37; this interaction controls CLEC7A-mediated IL-6 production. Phosphorylated on tyrosine residues in response to beta-glucan binding. As to expression, detected in dendritic cells, in paracortical and medullary regions of lymph nodes, and in spleen red pulp and white pulp.

Its subcellular location is the cell membrane. Lectin that functions as a pattern recognizing receptor (PRR) specific for beta-1,3-linked and beta-1,6-linked glucans, which constitute cell wall constituents from pathogenic bacteria and fungi. Necessary for the TLR2-mediated inflammatory response and activation of NF-kappa-B: upon beta-glucan binding, recruits SYK via its ITAM motif and promotes a signaling cascade that activates some CARD domain-BCL10-MALT1 (CBM) signalosomes, leading to the activation of NF-kappa-B and MAP kinase p38 (MAPK11, MAPK12, MAPK13 and/or MAPK14) pathways which stimulate expression of genes encoding pro-inflammatory cytokines and chemokines. Enhances cytokine production in macrophages and dendritic cells. Mediates production of reactive oxygen species in the cell. Mediates phagocytosis of C.albicans conidia. Binds T-cells in a way that does not involve their surface glycans and plays a role in T-cell activation. Stimulates T-cell proliferation. Induces phosphorylation of SCIMP after binding beta-glucans. This is C-type lectin domain family 7 member A (CLEC7A) from Macaca mulatta (Rhesus macaque).